The primary structure comprises 326 residues: Probable protein phosphatase 2C 61 (326 aa).

Residues L42–L316 enclose the PPM-type phosphatase domain. D77, G78, D261, and D307 together coordinate Mn(2+).

This sequence belongs to the PP2C family. It depends on Mg(2+) as a cofactor. The cofactor is Mn(2+).

The catalysed reaction is O-phospho-L-seryl-[protein] + H2O = L-seryl-[protein] + phosphate. It catalyses the reaction O-phospho-L-threonyl-[protein] + H2O = L-threonyl-[protein] + phosphate. The sequence is that of Probable protein phosphatase 2C 61 from Arabidopsis thaliana (Mouse-ear cress).